We begin with the raw amino-acid sequence, 351 residues long: Leukotriene B4 receptor 1 (351 aa).

At 1–21 (MAANTTSPAAPSSPGGMSLSL) the chain is on the extracellular side. An N-linked (GlcNAc...) asparagine glycan is attached at Asn-4. A helical membrane pass occupies residues 22-44 (LPIVLLSVALAVGLPGNSFVVWS). The Cytoplasmic segment spans residues 45–56 (ILKRMQKRTVTA). The chain crosses the membrane as a helical span at residues 57–77 (LLVLNLALADLAVLLTAPFFL). Residues 78–93 (HFLARGTWSFREMGCR) are Extracellular-facing. A helical membrane pass occupies residues 94–115 (LCHYVCGISMYASVLLITIMSL). Residues 116 to 140 (DRSLAVARPFMSQKVRTKAFARWVL) lie on the Cytoplasmic side of the membrane. Residues 141–161 (AGIWVVSFLLAIPVLVYRTVK) traverse the membrane as a helical segment. Residues 162–179 (WNNRTLICAPNYPNKEHK) are Extracellular-facing. The N-linked (GlcNAc...) asparagine glycan is linked to Asn-164. Residues 180–200 (VFHLLFEAITGFLLPFLAVVA) traverse the membrane as a helical segment. Over 201–222 (SYSDIGRRLQARRFRRSRRTGR) the chain is Cytoplasmic. A helical membrane pass occupies residues 223–243 (LVVLIILAFAAFWLPYHLVNL). The Extracellular segment spans residues 244-268 (VEAGRTVAGWDKNSPAGQRLRLARY). A helical transmembrane segment spans residues 269-289 (VLIALAFLSSSVNPVLYACAG). The Cytoplasmic portion of the chain corresponds to 290–351 (GGLLRSAGVG…TSSTIPESSK (62 aa)). 2 stretches are compositionally biased toward polar residues: residues 311–326 (EVSS…QTPK) and 339–351 (SFMT…ESSK). A disordered region spans residues 311–351 (EVSSTRRGGTLVQTPKDTPACPEPGPTDSFMTSSTIPESSK).

Belongs to the G-protein coupled receptor 1 family. In terms of processing, phosphorylated by GRK6 upon leukotriene B4 binding; which promotes desensitization. As to expression, highly expressed on activated leukocytes, including eosinophils.

It is found in the cell membrane. Its function is as follows. Receptor for leukotriene B4, a potent chemoattractant involved in inflammation and immune response. The protein is Leukotriene B4 receptor 1 (Ltb4r) of Mus musculus (Mouse).